A 224-amino-acid polypeptide reads, in one-letter code: Heme response regulator HssR (224 aa).

The Response regulatory domain occupies 3-116 (NCLIVDDDKK…ELLFRIKAVL (114 aa)). Asp-52 is subject to 4-aspartylphosphate. Residues 124-222 (DNELQLGNLI…VRGQGYRVDQ (99 aa)) constitute a DNA-binding region (ompR/PhoB-type).

Post-translationally, phosphorylated by HssS.

It localises to the cytoplasm. In terms of biological role, member of the two-component regulatory system HssS/HssR involved in intracellular heme homeostasis and tempering of staphylococcal virulence. Phosphorylated HssR binds to a direct repeat sequence within hrtAB promoter and activates the expression of hrtAB, an efflux pump, in response to extracellular heme, hemin, hemoglobin or blood. The protein is Heme response regulator HssR (hssR) of Staphylococcus epidermidis (strain ATCC 12228 / FDA PCI 1200).